The primary structure comprises 270 residues: Monofunctional glycosyltransferase (270 aa).

A disordered region spans residues M1 to Q35. The segment covering N11–H24 has biased composition (polar residues). Residues L47 to L67 form a helical membrane-spanning segment.

Belongs to the glycosyltransferase 51 family.

The protein resides in the cell membrane. The catalysed reaction is [GlcNAc-(1-&gt;4)-Mur2Ac(oyl-L-Ala-gamma-D-Glu-L-Lys-D-Ala-D-Ala)](n)-di-trans,octa-cis-undecaprenyl diphosphate + beta-D-GlcNAc-(1-&gt;4)-Mur2Ac(oyl-L-Ala-gamma-D-Glu-L-Lys-D-Ala-D-Ala)-di-trans,octa-cis-undecaprenyl diphosphate = [GlcNAc-(1-&gt;4)-Mur2Ac(oyl-L-Ala-gamma-D-Glu-L-Lys-D-Ala-D-Ala)](n+1)-di-trans,octa-cis-undecaprenyl diphosphate + di-trans,octa-cis-undecaprenyl diphosphate + H(+). It functions in the pathway cell wall biogenesis; peptidoglycan biosynthesis. Functionally, peptidoglycan polymerase that catalyzes glycan chain elongation using lipid-linked disaccharide-pentapeptide as the substrate. The sequence is that of Monofunctional glycosyltransferase from Staphylococcus saprophyticus subsp. saprophyticus (strain ATCC 15305 / DSM 20229 / NCIMB 8711 / NCTC 7292 / S-41).